The sequence spans 83 residues: MEEERIYTIPLRDVTNKSPTTKRAPRAIRAIRAFLMKHMKSDVVKLDNSINEKVWERSLNKIPAKVRVKAVKEGDVVKATLIE.

This sequence belongs to the eukaryotic ribosomal protein eL31 family.

The polypeptide is Large ribosomal subunit protein eL31 (Methanococcus vannielii (strain ATCC 35089 / DSM 1224 / JCM 13029 / OCM 148 / SB)).